The chain runs to 322 residues: Phosphatidylserine decarboxylase proenzyme (322 aa).

Active-site charge relay system; for autoendoproteolytic cleavage activity residues include D90, H147, and S254. Residue S254 is the Schiff-base intermediate with substrate; via pyruvic acid; for decarboxylase activity of the active site. Position 254 is a pyruvic acid (Ser); by autocatalysis (S254). The disordered stretch occupies residues 293-322 (PDAEPAPLPAEEIEAEHDASPLVDDKKDQV). Over residues 308–322 (EHDASPLVDDKKDQV) the composition is skewed to basic and acidic residues.

It belongs to the phosphatidylserine decarboxylase family. PSD-B subfamily. Prokaryotic type I sub-subfamily. As to quaternary structure, heterodimer of a large membrane-associated beta subunit and a small pyruvoyl-containing alpha subunit. It depends on pyruvate as a cofactor. Post-translationally, is synthesized initially as an inactive proenzyme. Formation of the active enzyme involves a self-maturation process in which the active site pyruvoyl group is generated from an internal serine residue via an autocatalytic post-translational modification. Two non-identical subunits are generated from the proenzyme in this reaction, and the pyruvate is formed at the N-terminus of the alpha chain, which is derived from the carboxyl end of the proenzyme. The autoendoproteolytic cleavage occurs by a canonical serine protease mechanism, in which the side chain hydroxyl group of the serine supplies its oxygen atom to form the C-terminus of the beta chain, while the remainder of the serine residue undergoes an oxidative deamination to produce ammonia and the pyruvoyl prosthetic group on the alpha chain. During this reaction, the Ser that is part of the protease active site of the proenzyme becomes the pyruvoyl prosthetic group, which constitutes an essential element of the active site of the mature decarboxylase.

It is found in the cell membrane. The enzyme catalyses a 1,2-diacyl-sn-glycero-3-phospho-L-serine + H(+) = a 1,2-diacyl-sn-glycero-3-phosphoethanolamine + CO2. It participates in phospholipid metabolism; phosphatidylethanolamine biosynthesis; phosphatidylethanolamine from CDP-diacylglycerol: step 2/2. Its function is as follows. Catalyzes the formation of phosphatidylethanolamine (PtdEtn) from phosphatidylserine (PtdSer). The protein is Phosphatidylserine decarboxylase proenzyme of Escherichia coli O139:H28 (strain E24377A / ETEC).